The sequence spans 185 residues: Kappa-casein (185 aa).

The N-terminal stretch at M1 to A20 is a signal peptide. T143 is a glycosylation site (O-linked (GalNAc...) threonine). At S161 the chain carries Phosphoserine; alternate. A glycan (O-linked (GalNAc...) serine; alternate) is linked at S161. T178 carries an O-linked (GalNAc...) threonine glycan. Position 179 is a phosphoserine (S179).

The protein belongs to the kappa-casein family. In terms of tissue distribution, mammary gland specific. Secreted in milk.

It localises to the secreted. Its function is as follows. Kappa-casein stabilizes micelle formation, preventing casein precipitation in milk. The protein is Kappa-casein (CSN3) of Equus caballus (Horse).